A 684-amino-acid chain; its full sequence is Multisite-specific tRNA:(cytosine-C(5))-methyltransferase (684 aa).

A compositionally biased stretch (basic residues) spans 1–12; it reads MARRKNFKKGNK. Positions 1–24 are disordered; the sequence is MARRKNFKKGNKKTFGARDDSRAQ. S-adenosyl-L-methionine contacts are provided by residues 173 to 179, aspartate 202, aspartate 229, and aspartate 257; that span reads CAAPGSK. Residue cysteine 310 is the Nucleophile of the active site. Residue threonine 426 is modified to Phosphothreonine. The residue at position 431 (serine 431) is a Phosphoserine. Residues 650–684 are disordered; that stretch reads KATPSAEEKEKEKETTESPAETTTGTSTEAPSAAN. Residues 655 to 665 are compositionally biased toward basic and acidic residues; sequence AEEKEKEKETT. A compositionally biased stretch (low complexity) spans 666–684; it reads ESPAETTTGTSTEAPSAAN. Serine 667 bears the Phosphoserine mark.

The protein belongs to the class I-like SAM-binding methyltransferase superfamily. RsmB/NOP family. TRM4 subfamily.

It is found in the nucleus. The protein resides in the nucleolus. The catalysed reaction is cytidine(34) in tRNA precursor + S-adenosyl-L-methionine = 5-methylcytidine(34) in tRNA precursor + S-adenosyl-L-homocysteine + H(+). It catalyses the reaction cytidine(40) in tRNA precursor + S-adenosyl-L-methionine = 5-methylcytidine(40) in tRNA precursor + S-adenosyl-L-homocysteine + H(+). It carries out the reaction cytidine(48) in tRNA + S-adenosyl-L-methionine = 5-methylcytidine(48) in tRNA + S-adenosyl-L-homocysteine + H(+). The enzyme catalyses cytidine(49) in tRNA + S-adenosyl-L-methionine = 5-methylcytidine(49) in tRNA + S-adenosyl-L-homocysteine + H(+). Its function is as follows. Methylates cytosine to m5C at several positions in different tRNAs and pre-tRNAs containing intron. Able to modify tRNAs at all four positions (34, 40, 48 and 49) at which m5C has been found in tRNAs. May be involved in ribosome biogenesis as its disruption leads to increased sensitivity to the antibiotic paromomycin. This is Multisite-specific tRNA:(cytosine-C(5))-methyltransferase (NCL1) from Saccharomyces cerevisiae (strain ATCC 204508 / S288c) (Baker's yeast).